The sequence spans 504 residues: MKNEKRKTGIEPKVFFPPLIIVGILCWLTVRDLDAANVVINAVFSYVTNVWGWAFEWYMVVMLFGWFWLVFGPYAKKRLGNEPPEFSTASWIFMMFASCTSAAVLFWGSIEIYYYISTPPFGLEPNSTGAKELGLAYSLFHWGPLPWATYSFLSVAFAYFFFVRKMEVIRPSSTLVPLVGEKHAKGLFGTIVDNFYLVALIFAMGTSLGLATPLVTECMQWLFGIPHTLQLDAIIITCWIILNAICVACGLQKGVRIASDVRSYLSFLMLGWVFIVSGASFIMNYFTDSVGMLLMYLPRMLFYTDPIAKGGFPQGWTVFYWAWWVIYAIQMSIFLARISRGRTVRELCFGMVLGLTASTWILWTVLGSNTLLLIDKNIINIPNLIEQYGVARAIIETWAALPLSTATMWGFFILCFIATVTLVNACSYTLAMSTCREVRDGEEPPLLVRIGWSILVGIIGIVLLALGGLKPIQTAIIAGGCPLFFVNIMVTLSFIKDAKQNWKD.

The next 12 membrane-spanning stretches (helical) occupy residues 10–30, 51–71, 92–112, 143–163, 195–215, 231–251, 263–283, 316–336, 347–367, 398–418, 446–466, and 475–495; these read IEPK…WLTV, WGWA…WLVF, IFMM…SIEI, GPLP…FFFV, FYLV…TPLV, LDAI…ACGL, SYLS…SFIM, WTVF…IFLA, LCFG…TVLG, WAAL…CFIA, LLVR…LLAL, and AIIA…LSFI.

It belongs to the BCCT transporter (TC 2.A.15) family. CaiT subfamily. As to quaternary structure, homotrimer.

Its subcellular location is the cell inner membrane. It catalyses the reaction 4-(trimethylamino)butanoate(in) + (R)-carnitine(out) = 4-(trimethylamino)butanoate(out) + (R)-carnitine(in). Its pathway is amine and polyamine metabolism; carnitine metabolism. Catalyzes the exchange of L-carnitine for gamma-butyrobetaine. The chain is L-carnitine/gamma-butyrobetaine antiporter from Escherichia coli (strain K12 / MC4100 / BW2952).